The sequence spans 270 residues: NAD kinase (270 aa).

The Proton acceptor role is filled by D63. Residues 63–64, R68, 131–132, K142, R159, D161, 172–177, A196, and Q230 each bind NAD(+); these read DG, NE, and TAYAMS.

The protein belongs to the NAD kinase family. The cofactor is a divalent metal cation.

The protein resides in the cytoplasm. The enzyme catalyses NAD(+) + ATP = ADP + NADP(+) + H(+). Its function is as follows. Involved in the regulation of the intracellular balance of NAD and NADP, and is a key enzyme in the biosynthesis of NADP. Catalyzes specifically the phosphorylation on 2'-hydroxyl of the adenosine moiety of NAD to yield NADP. In Methanoregula boonei (strain DSM 21154 / JCM 14090 / 6A8), this protein is NAD kinase.